Consider the following 444-residue polypeptide: Argininosuccinate synthase (444 aa).

ATP-binding positions include 17 to 25 (AFSGGLDTS) and Ala-43. Tyr-99 provides a ligand contact to L-citrulline. 2 residues coordinate ATP: Gly-129 and Thr-131. Positions 131, 135, and 136 each coordinate L-aspartate. Asn-135 serves as a coordination point for L-citrulline. Asp-136 is an ATP binding site. L-citrulline is bound by residues Arg-139 and Ser-192. Asp-194 lines the ATP pocket. 3 residues coordinate L-citrulline: Thr-201, Glu-203, and Glu-280.

This sequence belongs to the argininosuccinate synthase family. Type 2 subfamily. In terms of assembly, homotetramer.

Its subcellular location is the cytoplasm. The catalysed reaction is L-citrulline + L-aspartate + ATP = 2-(N(omega)-L-arginino)succinate + AMP + diphosphate + H(+). It participates in amino-acid biosynthesis; L-arginine biosynthesis; L-arginine from L-ornithine and carbamoyl phosphate: step 2/3. This Burkholderia lata (strain ATCC 17760 / DSM 23089 / LMG 22485 / NCIMB 9086 / R18194 / 383) protein is Argininosuccinate synthase.